The following is a 170-amino-acid chain: uncharacterized protein (170 aa).

This is an uncharacterized protein from Treponema pallidum (strain Nichols).